Here is a 418-residue protein sequence, read N- to C-terminus: ATP phosphoribosyltransferase regulatory subunit (418 aa).

It belongs to the class-II aminoacyl-tRNA synthetase family. HisZ subfamily. In terms of assembly, heteromultimer composed of HisG and HisZ subunits.

The protein localises to the cytoplasm. It participates in amino-acid biosynthesis; L-histidine biosynthesis; L-histidine from 5-phospho-alpha-D-ribose 1-diphosphate: step 1/9. In terms of biological role, required for the first step of histidine biosynthesis. May allow the feedback regulation of ATP phosphoribosyltransferase activity by histidine. This is ATP phosphoribosyltransferase regulatory subunit from Acetivibrio thermocellus (strain ATCC 27405 / DSM 1237 / JCM 9322 / NBRC 103400 / NCIMB 10682 / NRRL B-4536 / VPI 7372) (Clostridium thermocellum).